The primary structure comprises 607 residues: SNW/SKI-interacting protein A (607 aa).

Disordered stretches follow at residues 29–77 (ERYG…GGAF), 178–205 (AQPKNVPTHDSESKFIKYKPSQQSAAFN), 217–265 (EMAQ…IPPC), 327–434 (LQLK…DRDR), and 516–607 (KVMK…ERGR). The span at 35-49 (SAQSDAAAAAAKPSG) shows a compositional bias: low complexity. Positions 190-353 (SKFIKYKPSQ…QKARMERTGA (164 aa)) are SNW. Residues 240-251 (PPVPVMHSPPRP) show a composition bias toward pro residues. 2 coiled-coil regions span residues 313 to 349 (AREAVQMRSKVQRELQLKEKERKEQELRALAQKARME) and 391 to 418 (EREARIERDRIREERRRERERERRLEAR). Basic and acidic residues-rich tracts occupy residues 327-339 (LQLKEKERKEQEL), 379-434 (EQPR…DRDR), 516-527 (KVMKTDRFKPDK), 535-550 (RSGKRDRPVEFDKQEE), and 562-571 (EVKKGKKAVE).

The protein belongs to the SNW family. Interacts with FLO6/SIP4. Interacts with DIS1. In terms of tissue distribution, widely expressed.

Its subcellular location is the nucleus. Its function is as follows. Acts as a positive regulator of drought and salt tolerance. Acts as a positive regulator of cell viability. This is SNW/SKI-interacting protein A from Oryza sativa subsp. japonica (Rice).